Here is a 209-residue protein sequence, read N- to C-terminus: Kynurenine formamidase (209 aa).

A substrate-binding site is contributed by Trp20. His50, His54, and Asp56 together coordinate Zn(2+). The active-site Proton donor/acceptor is the His60. His161 and Glu173 together coordinate Zn(2+).

Belongs to the Cyclase 1 superfamily. KynB family. In terms of assembly, homodimer. Zn(2+) is required as a cofactor.

The catalysed reaction is N-formyl-L-kynurenine + H2O = L-kynurenine + formate + H(+). It functions in the pathway amino-acid degradation; L-tryptophan degradation via kynurenine pathway; L-kynurenine from L-tryptophan: step 2/2. Catalyzes the hydrolysis of N-formyl-L-kynurenine to L-kynurenine, the second step in the kynurenine pathway of tryptophan degradation. The protein is Kynurenine formamidase of Bacillus cereus (strain ATCC 14579 / DSM 31 / CCUG 7414 / JCM 2152 / NBRC 15305 / NCIMB 9373 / NCTC 2599 / NRRL B-3711).